Here is a 602-residue protein sequence, read N- to C-terminus: Pentatricopeptide repeat-containing protein At5g11310, mitochondrial (602 aa).

The transit peptide at 1-35 (MNSLFTAFRRNLLLNPNPHRNFFLHRLLSSSRRSS) directs the protein to the mitochondrion. PPR repeat units follow at residues 134 to 165 (SPSL…VRSD), 172 to 202 (SADT…ARSY), 211 to 241 (ELRL…IGGT), 249 to 283 (SVRI…NVKP), 284 to 318 (TVVT…EMEI), 319 to 353 (NFMV…ESGP), 354 to 388 (TIVT…GVDP), 389 to 423 (TTTT…GHSP), 424 to 458 (DRLT…GIDP), 459 to 493 (DLLT…GIIP), and 494 to 528 (QYIT…PHSK).

Belongs to the PPR family. P subfamily.

The protein localises to the mitochondrion. This chain is Pentatricopeptide repeat-containing protein At5g11310, mitochondrial, found in Arabidopsis thaliana (Mouse-ear cress).